The following is a 127-amino-acid chain: Aspartate 1-decarboxylase (127 aa).

Catalysis depends on serine 25, which acts as the Schiff-base intermediate with substrate; via pyruvic acid. Serine 25 bears the Pyruvic acid (Ser) mark. Threonine 57 is a substrate binding site. The active-site Proton donor is the tyrosine 58. A substrate-binding site is contributed by 73–75; sequence GAA.

Belongs to the PanD family. In terms of assembly, heterooctamer of four alpha and four beta subunits. It depends on pyruvate as a cofactor. Post-translationally, is synthesized initially as an inactive proenzyme, which is activated by self-cleavage at a specific serine bond to produce a beta-subunit with a hydroxyl group at its C-terminus and an alpha-subunit with a pyruvoyl group at its N-terminus.

The protein resides in the cytoplasm. It catalyses the reaction L-aspartate + H(+) = beta-alanine + CO2. Its pathway is cofactor biosynthesis; (R)-pantothenate biosynthesis; beta-alanine from L-aspartate: step 1/1. In terms of biological role, catalyzes the pyruvoyl-dependent decarboxylation of aspartate to produce beta-alanine. The chain is Aspartate 1-decarboxylase from Bacillus cereus (strain 03BB102).